We begin with the raw amino-acid sequence, 121 residues long: Large ribosomal subunit protein uL18 (121 aa).

Residues 1–25 (MKIVISKPDKNKIRQKRHRRVRGKL) are disordered. Residues 13–23 (IRQKRHRRVRG) show a composition bias toward basic residues.

This sequence belongs to the universal ribosomal protein uL18 family. As to quaternary structure, part of the 50S ribosomal subunit; part of the 5S rRNA/L5/L18/L25 subcomplex. Contacts the 5S and 23S rRNAs.

Functionally, this is one of the proteins that bind and probably mediate the attachment of the 5S RNA into the large ribosomal subunit, where it forms part of the central protuberance. The chain is Large ribosomal subunit protein uL18 from Streptococcus pyogenes serotype M28 (strain MGAS6180).